Reading from the N-terminus, the 600-residue chain is ATP-dependent RNA helicase DDX55 (600 aa).

Positions 9–37 (WESLQVPLHPRVLGALRELGFPHMTPVQS) match the Q motif motif. Residues 40–223 (IPLFMKNKDV…RAGLRNPVRI (184 aa)) form the Helicase ATP-binding domain. 53–60 (AVTGSGKT) is an ATP binding site. The DEAD box motif lies at 171-174 (DEAD). Residues 254–402 (KFNQLVHFLR…EMSLQRNTID (149 aa)) enclose the Helicase C-terminal domain. Residues 499-513 (LEQKRKERSENEGRK) show a composition bias toward basic and acidic residues. Residues 499–551 (LEQKRKERSENEGRKKFIKNKAWSKQKAKKERKKKMNAKRKKDEGSDIDDEDM) are disordered. The segment covering 514-538 (KFIKNKAWSKQKAKKERKKKMNAKR) has biased composition (basic residues). Positions 533–562 (KMNAKRKKDEGSDIDDEDMEELLNDTRLLK) are important for nuclear localization. Residues Ser-544 and Ser-594 each carry the phosphoserine modification.

This sequence belongs to the DEAD box helicase family. DDX55/SPB4 subfamily. Interacts with 28S rRNA. Interacts with double-stranded RNA substrates in vitro; the interaction stimulates ATPase activity.

The protein localises to the nucleus. It localises to the nucleoplasm. The catalysed reaction is ATP + H2O = ADP + phosphate + H(+). Functionally, probable ATP-binding RNA helicase. Has ATPase activity and is involved in the maturation of precursor large subunit rRNAs. The chain is ATP-dependent RNA helicase DDX55 (Ddx55) from Mus musculus (Mouse).